The sequence spans 72 residues: Protein RALF-like 20 (72 aa).

The N-terminal stretch at 1 to 27 is a signal peptide; sequence MVLSKKTIMQSFALMIILSIVMSTTEA. 2 disulfide bridges follow: cysteine 43/cysteine 51 and cysteine 63/cysteine 69.

This sequence belongs to the plant rapid alkalinization factor (RALF) family.

Its subcellular location is the secreted. In terms of biological role, cell signaling peptide that may regulate plant stress, growth, and development. Mediates a rapid alkalinization of extracellular space by mediating a transient increase in the cytoplasmic Ca(2+) concentration leading to a calcium-dependent signaling events through a cell surface receptor and a concomitant activation of some intracellular mitogen-activated protein kinases. In Arabidopsis thaliana (Mouse-ear cress), this protein is Protein RALF-like 20 (RALFL20).